The following is a 474-amino-acid chain: Gamma-aminobutyric acid receptor subunit beta-2 (474 aa).

A signal peptide spans 1–25; the sequence is MWRVRKRGYFGIWSFPLIIAAVCAQ. Residues 26–244 are Extracellular-facing; that stretch reads SVNDPSNMSL…SFKLKRNIGY (219 aa). Asn-32 and Asn-104 each carry an N-linked (GlcNAc...) asparagine glycan. Position 121 (Tyr-121) interacts with histamine. A disulfide bridge connects residues Cys-160 and Cys-174. An N-linked (GlcNAc...) asparagine glycan is attached at Asn-173. Residues 180-181 and Thr-226 each bind histamine; that span reads SY. The 4-aminobutanoate site is built by Tyr-181 and Thr-226. A run of 3 helical transmembrane segments spans residues 245–266, 270–292, and 304–326; these read FILQTYMPSILITILSWVSFWI, ASAARVALGITTVLTMTTINTHL, and AIDMYLMGCFVFVFMALLEYALV. Over 327-451 the chain is Cytoplasmic; it reads NYIFFGRGPQ…DLTDVNAIDR (125 aa). At Tyr-403 the chain carries Phosphotyrosine. A helical membrane pass occupies residues 452 to 473; the sequence is WSRIFFPVVFSFFNIVYWLYYV.

Belongs to the ligand-gated ion channel (TC 1.A.9) family. Gamma-aminobutyric acid receptor (TC 1.A.9.5) subfamily. GABRB2 sub-subfamily. Heteropentamer, formed by a combination of alpha (GABRA1-6), beta (GABRB1-3), gamma (GABRG1-3), delta (GABRD), epsilon (GABRE), rho (GABRR1-3), pi (GABRP) and theta (GABRQ) chains, each subunit exhibiting distinct physiological and pharmacological properties. Interacts with UBQLN1. May interact with KIF21B. Identified in a complex of 720 kDa composed of LHFPL4, NLGN2, GABRA1, GABRB2, GABRG2 and GABRB3. Glycosylated. Expressed in brain (at protein level), in cerebellar granule cells. Expressed in lungs, in alveolar epithelium.

The protein resides in the postsynaptic cell membrane. It is found in the cell membrane. Its subcellular location is the cytoplasmic vesicle membrane. The catalysed reaction is chloride(in) = chloride(out). Its activity is regulated as follows. Allosterically activated by benzodiazepines and the anesthetic etomidate. Inhibited by the antagonist bicuculline. Potentiated by histamine. Its function is as follows. Beta subunit of the heteropentameric ligand-gated chloride channel gated by gamma-aminobutyric acid (GABA), a major inhibitory neurotransmitter in the brain. GABA-gated chloride channels, also named GABA(A) receptors (GABAAR), consist of five subunits arranged around a central pore and contain GABA active binding site(s) located at the alpha and beta subunit interface(s). When activated by GABA, GABAARs selectively allow the flow of chloride anions across the cell membrane down their electrochemical gradient. Chloride influx into the postsynaptic neuron following GABAAR opening decreases the neuron ability to generate a new action potential, thereby reducing nerve transmission. GABAARs containing alpha-1 and beta-2 or -3 subunits exhibit synaptogenic activity; the gamma-2 subunit being necessary but not sufficient to induce rapid synaptic contacts formation. Extrasynaptic beta-2 receptors contribute to the tonic GABAergic inhibition. Beta-containing GABAARs can simultaneously bind GABA and histamine where histamine binds at the interface of two neighboring beta subunits, which may be involved in the regulation of sleep and wakefulness. This Rattus norvegicus (Rat) protein is Gamma-aminobutyric acid receptor subunit beta-2.